Reading from the N-terminus, the 434-residue chain is Chaperone SurA (434 aa).

Positions 1–29 are cleaved as a signal peptide; it reads MKTLRLNFRSAILKALGALLLLQGCLAHA. 2 consecutive PpiC domains span residues 180 to 281 and 290 to 389; these read AEEY…AMLE and VEQS…QVQD.

The protein resides in the periplasm. It catalyses the reaction [protein]-peptidylproline (omega=180) = [protein]-peptidylproline (omega=0). Chaperone involved in the correct folding and assembly of outer membrane proteins. Recognizes specific patterns of aromatic residues and the orientation of their side chains, which are found more frequently in integral outer membrane proteins. May act in both early periplasmic and late outer membrane-associated steps of protein maturation. The sequence is that of Chaperone SurA from Hahella chejuensis (strain KCTC 2396).